Here is a 165-residue protein sequence, read N- to C-terminus: Phosphopantetheine adenylyltransferase (165 aa).

Substrate is bound at residue serine 8. ATP is bound by residues 8-9 and histidine 16; that span reads SF. The substrate site is built by lysine 40, threonine 72, and arginine 86. ATP contacts are provided by residues 87–89, glutamate 97, and 122–128; these read GLR and YSFLSSS.

This sequence belongs to the bacterial CoaD family. Homohexamer. The cofactor is Mg(2+).

It is found in the cytoplasm. It catalyses the reaction (R)-4'-phosphopantetheine + ATP + H(+) = 3'-dephospho-CoA + diphosphate. It participates in cofactor biosynthesis; coenzyme A biosynthesis; CoA from (R)-pantothenate: step 4/5. Functionally, reversibly transfers an adenylyl group from ATP to 4'-phosphopantetheine, yielding dephospho-CoA (dPCoA) and pyrophosphate. The protein is Phosphopantetheine adenylyltransferase of Synechococcus sp. (strain WH7803).